A 766-amino-acid chain; its full sequence is Serine/threonine-protein kinase B-raf (766 aa).

Residues 1-13 are compositionally biased toward gly residues; the sequence is MAALSGGGGGGAE. Residues 1 to 38 form a disordered region; that stretch reads MAALSGGGGGGAEPGQALFNGDMEPEAGAGAGAAASSA. Residue alanine 2 is modified to N-acetylalanine. Serine 151 is subject to Phosphoserine. The 73-residue stretch at 155–227 folds into the RBD domain; it reads PIVRVFLPNK…TGEELHVEVL (73 aa). Residues 234 to 280 form a Phorbol-ester/DAG-type zinc finger; sequence THNFVRKTFFTLAFCDFCRKLLFQGFRCQTCGYKFHQRCSTEVPLMC. Histidine 235, cysteine 248, cysteine 251, cysteine 261, cysteine 264, histidine 269, cysteine 272, and cysteine 280 together coordinate Zn(2+). Residues 308-454 are disordered; sequence AETALTSGSS…DSSDDWEIPD (147 aa). Residues 314–341 show a composition bias toward low complexity; the sequence is SGSSPSAPASDSIGPQILTSPSPSKSIP. Serine 333 carries the phosphoserine modification. The span at 348 to 363 shows a compositional bias: basic and acidic residues; the sequence is PADEDHRNQFGQRDRS. A Phosphoserine; by SGK1 modification is found at serine 365. The residue at position 373 (threonine 373) is a Phosphothreonine; by autocatalysis. At threonine 396 the chain carries Phosphothreonine. Serine 399 bears the Phosphoserine mark. A Phosphothreonine modification is found at threonine 401. Basic and acidic residues predominate over residues 423-447; the sequence is QRERKSSSSSEDRNRMKTLGRRDSS. 2 positions are modified to phosphoserine: serine 446 and serine 447. The 261-residue stretch at 457–717 folds into the Protein kinase domain; it reads ITVGQRIGSG…PQILASIELL (261 aa). ATP is bound by residues 463–471 and lysine 483; that span reads IGSGSFGTV. Residue aspartate 576 is the Proton acceptor of the active site. A Glycyl lysine isopeptide (Lys-Gly) (interchain with G-Cter in ubiquitin) cross-link involves residue lysine 578. Arginine 671 carries the post-translational modification Omega-N-methylarginine; by PRMT5. Phosphoserine is present on residues serine 729 and serine 750. Threonine 753 is modified (phosphothreonine; by MAPK1).

It belongs to the protein kinase superfamily. TKL Ser/Thr protein kinase family. RAF subfamily. In terms of assembly, monomer. Homodimer. Heterodimerizes with RAF1, and the heterodimer possesses a highly increased kinase activity compared to the respective homodimers or monomers. Heterodimerization is mitogen-regulated and enhanced by 14-3-3 proteins. MAPK1/ERK2 activation can induce a negative feedback that promotes the dissociation of the heterodimer by phosphorylating BRAF at Thr-753. Heterodimerizes (via N-terminus) with KSR1 (via N-terminus) or KSR2 (via N-terminus) in a MAP2K1-dependent manner. Interacts with MAP2K1 and MAP2K2. Found in a complex with at least BRAF, HRAS, MAP2K1, MAPK3 and RGS14. Interacts with RIT1. Interacts (via N-terminus) with RGS14 (via RBD domains); the interaction mediates the formation of a ternary complex with RAF1, a ternary complex inhibited by GNAI1. Interacts with DGKH. Interacts with PRMT5. Interacts with KSR2. Interacts with AKAP13, MAP2K1 and KSR1. Identified in a complex with AKAP13, MAP2K1 and KSR1. Interacts with FNIP1 and FNIP2. The cofactor is Zn(2+). In terms of processing, phosphorylation at Ser-365 by SGK1 inhibits its activity. Phosphorylation at Thr-753 by MAPK1. Dephosphorylation of Ser-365 by the SHOC2-MRAS-PP1c (SMP) complex consisting of SHOC2, GTP-bound M-Ras/MRAS and the catalytic subunit of protein phosphatase 1 (PPP1CA, PPP1CB or PPP1CC); this relieves inactivation and stimulates kinase activity. Post-translationally, methylation at Arg-671 decreases stability and kinase activity. Ubiquitinated by RNF149; which leads to proteasomal degradation. Polyubiquitinated at Lys-578 in response to EGF. Brain and testis.

Its subcellular location is the nucleus. It localises to the cytoplasm. The protein resides in the cell membrane. The catalysed reaction is L-seryl-[protein] + ATP = O-phospho-L-seryl-[protein] + ADP + H(+). It carries out the reaction L-threonyl-[protein] + ATP = O-phospho-L-threonyl-[protein] + ADP + H(+). Its activity is regulated as follows. In quiescent cells, maintained in an inactive state via an intramolecular interaction between the protein kinase and N-terminal domains. Following mitogen-mediated cell activation, binds via its RGB domain to active HRAS (GTP-bound) which releases the inhibitory intramolecular interaction between the two domains. This allows the MAP2K1-mediated dimerization of KSR1 or KSR2, and BRAF which activates BRAF. Protein kinase involved in the transduction of mitogenic signals from the cell membrane to the nucleus. Phosphorylates MAP2K1, and thereby activates the MAP kinase signal transduction pathway. Phosphorylates PFKFB2. May play a role in the postsynaptic responses of hippocampal neurons. The polypeptide is Serine/threonine-protein kinase B-raf (Homo sapiens (Human)).